The chain runs to 736 residues: Dynamin-1-like protein (736 aa).

At methionine 1 the chain carries N-acetylmethionine. The 281-residue stretch at 22–302 folds into the Dynamin-type G domain; that stretch reads IIQLPQIVVV…LMHHIRDCLP (281 aa). Positions 32-39 are G1 motif; it reads GTQSSGKS. 32 to 40 contributes to the GTP binding site; that stretch reads GTQSSGKSS. The segment at 58–60 is G2 motif; the sequence is VTR. Residues 146-149 are G3 motif; it reads DLPG. Residues 215–218 are G4 motif; it reads TKLD. Residues 215–221 and 246–249 each bind GTP; these read TKLDLMD and NRSQ. A G5 motif region spans residues 245 to 248; the sequence is VNRS. A middle domain region spans residues 344–489; that stretch reads YCNTIEGTAK…NEMVHNLVAI (146 aa). Positions 448 to 685 are interaction with GSK3B; the sequence is NYSTQELLRF…NHVKDTLQSE (238 aa). A b domain region spans residues 502 to 569; it reads ADACGLMNNN…IQDNRRETKN (68 aa). The interval 522 to 554 is disordered; the sequence is RELPSAGSRDKSSKVPSALAPASQEPPPAASAE. Position 529 is a phosphoserine (serine 529). Glycyl lysine isopeptide (Lys-Gly) (interchain with G-Cter in SUMO) cross-links involve residues lysine 532, lysine 535, lysine 558, and lysine 568. The segment at 542-736 is C-terminal dimerization domain; that stretch reads PASQEPPPAA…IAEIRETHLW (195 aa). The segment at 566 to 588 is disordered; it reads ETKNVPSAGGGIGDGGQEPTTGN. Residues threonine 585 and threonine 586 are each glycosylated (O-linked (GlcNAc) threonine). Lysine 594 is covalently cross-linked (Glycyl lysine isopeptide (Lys-Gly) (interchain with G-Cter in SUMO)). The residue at position 597 (lysine 597) is an N6-acetyllysine; alternate. Lysine 597 participates in a covalent cross-link: Glycyl lysine isopeptide (Lys-Gly) (interchain with G-Cter in SUMO); alternate. Lysine 606 participates in a covalent cross-link: Glycyl lysine isopeptide (Lys-Gly) (interchain with G-Cter in SUMO). At serine 607 the chain carries Phosphoserine. A Glycyl lysine isopeptide (Lys-Gly) (interchain with G-Cter in SUMO) cross-link involves residue lysine 608. Serine 616 is modified (phosphoserine; by PINK1). Position 637 is a phosphoserine; by CAMK1 and PKA (serine 637). Residue cysteine 644 is modified to S-nitrosocysteine. The GED domain maps to 644 to 735; that stretch reads CEVIERLIKS…IIAEIRETHL (92 aa). An important for homodimerization region spans residues 654-668; sequence YFLIVRKNIQDSVPK.

It belongs to the TRAFAC class dynamin-like GTPase superfamily. Dynamin/Fzo/YdjA family. Homotetramer; dimerizes through the N-terminal GTP-middle region of one molecule binding to the GED domain of another DNM1L molecule. Oligomerizes in a GTP-dependent manner to form membrane-associated tubules with a spiral pattern. Interacts with GSK3B and MARCHF5. Interacts (via the GTPase and B domains) with UBE2I; the interaction promotes sumoylation of DNM1L, mainly in its B domain. Interacts with PPP3CA; the interaction dephosphorylates DNM1L and regulates its transition to mitochondria. Interacts with BCL2L1 isoform BCL-X(L) and CLTA; DNM1L and BCL2L1 isoform BCL-X(L) may form a complex in synaptic vesicles that also contains clathrin and MFF. Interacts with MFF; the interaction is inhibited by C11orf65/MFI. Interacts with FIS1. Interacts with MIEF2 and MIEF1; GTP-dependent, regulates GTP hydrolysis and DNM1L oligomerization. Interacts with PGAM5; this interaction leads to dephosphorylation at Ser-656 and activation of GTPase activity and eventually to mitochondria fragmentation. Interacts with RALBP1; during mitosis, recruits DNM1L to the mitochondrion and mediates its activation by the mitotic kinase cyclin B-CDK1. Interacts with FUNDC1; this interaction recruits DNM1L/DRP1 at ER-mitochondria contact sites. Phosphorylation/dephosphorylation events on two sites near the GED domain regulate mitochondrial fission. Phosphorylation on Ser-637 inhibits mitochondrial fission probably through preventing intramolecular interaction. Dephosphorylated on this site by PPP3CA which promotes mitochondrial fission. Phosphorylation on Ser-616 by Pink1 activates the GTPase activity and promotes mitochondrial fission. Phosphorylated in a circadian manner at Ser-637. Dephosphorylated by PGAM5. Post-translationally, sumoylated on various lysine residues within the B domain, probably by MUL1. Sumoylation positively regulates mitochondrial fission. Desumoylated by SENP5 during G2/M transition of mitosis. Appears to be linked to its catalytic activity. In terms of processing, S-nitrosylation increases DNM1L dimerization, mitochondrial fission and causes neuronal damage. O-GlcNAcylation augments the level of the GTP-bound active form of DNM1L and induces translocation from the cytoplasm to mitochondria in cardiomyocytes. It also decreases phosphorylation at Ser-637. Post-translationally, ubiquitination by MARCHF5 affects mitochondrial morphology. In terms of tissue distribution, expressed in the cerebellum and in several regions of the cerebrum and diencephalon. Strongly expressed in the cerebellar Purkinje cells and in the pontile giant neurons. Widely expressed. As to expression, brain-specific. In terms of tissue distribution, brain-specific (at protein level). Expressed in most of the subregions of the brain, including the cerebellum, midbrain, hippocampus, striatum, cerebral cortex, and brain stem. Weakly expressed in the olfactory bulb.

Its subcellular location is the cytoplasm. It is found in the cytosol. The protein resides in the golgi apparatus. It localises to the endomembrane system. The protein localises to the mitochondrion outer membrane. Its subcellular location is the peroxisome. It is found in the membrane. The protein resides in the clathrin-coated pit. It localises to the cytoplasmic vesicle. The protein localises to the secretory vesicle. Its subcellular location is the synaptic vesicle membrane. It is found in the lysosome. The protein resides in the late endosome. It localises to the cell membrane. The protein localises to the postsynaptic density. The catalysed reaction is GTP + H2O = GDP + phosphate + H(+). Functions in mitochondrial and peroxisomal division. Mediates membrane fission through oligomerization into membrane-associated tubular structures that wrap around the scission site to constrict and sever the mitochondrial membrane through a GTP hydrolysis-dependent mechanism. The specific recruitment at scission sites is mediated by membrane receptors like MFF, MIEF1 and MIEF2 for mitochondrial membranes. While the recruitment by the membrane receptors is GTP-dependent, the following hydrolysis of GTP induces the dissociation from the receptors and allows DNM1L filaments to curl into closed rings that are probably sufficient to sever a double membrane. Acts downstream of PINK1 to promote mitochondrial fission in a PRKN-dependent manner. Plays an important role in mitochondrial fission during mitosis. Required for formation of endocytic vesicles. Through its function in mitochondrial division, ensures the survival of at least some types of postmitotic neurons, including Purkinje cells, by suppressing oxidative damage. Required for normal brain development, including that of cerebellum. Facilitates developmentally regulated apoptosis during neural tube formation. Required for a normal rate of cytochrome c release and caspase activation during apoptosis; this requirement may depend upon the cell type and the physiological apoptotic cues. Proposed to regulate synaptic vesicle membrane dynamics through association with BCL2L1 isoform Bcl-X(L) which stimulates its GTPase activity in synaptic vesicles; the function may require its recruitment by MFF to clathrin-containing vesicles. Required for programmed necrosis execution. Rhythmic control of its activity following phosphorylation at Ser-637 is essential for the circadian control of mitochondrial ATP production. Its function is as follows. Regulates postsynaptic clathrin-mediated endocytosis by positioning the endocytic zone at the postsynaptic density, independently of mitochondrial division. The polypeptide is Dynamin-1-like protein (Mus musculus (Mouse)).